A 395-amino-acid chain; its full sequence is Peptide-N(4)-(N-acetyl-beta-glucosaminyl)asparagine amidase (395 aa).

Positions 131, 134, 172, and 175 each coordinate Zn(2+). Residue cysteine 198 is the Nucleophile of the active site. Residues histidine 232 and aspartate 249 contribute to the active site. A substrate-binding site is contributed by glutamate 252. A disordered region spans residues 363–395 (PELTKTTPSTDLPSGRQSGSTEWTKSRGENGES). Residues 366–385 (TKTTPSTDLPSGRQSGSTEW) are compositionally biased toward polar residues. Over residues 386 to 395 (TKSRGENGES) the composition is skewed to basic and acidic residues.

This sequence belongs to the transglutaminase-like superfamily. PNGase family. Requires Zn(2+) as cofactor.

It localises to the cytoplasm. The enzyme catalyses Hydrolysis of an N(4)-(acetyl-beta-D-glucosaminyl)asparagine residue in which the glucosamine residue may be further glycosylated, to yield a (substituted) N-acetyl-beta-D-glucosaminylamine and a peptide containing an aspartate residue.. Specifically deglycosylates the denatured form of N-linked glycoproteins in the cytoplasm and assists their proteasome-mediated degradation. Cleaves the beta-aspartyl-glucosamine (GlcNAc) of the glycan and the amide side chain of Asn, converting Asn to Asp. Prefers proteins containing high-mannose over those bearing complex type oligosaccharides. Can recognize misfolded proteins in the endoplasmic reticulum that are exported to the cytosol to be destroyed and deglycosylate them, while it has no activity toward native proteins. Deglycosylation is a prerequisite for subsequent proteasome-mediated degradation of some, but not all, misfolded glycoproteins. The protein is Peptide-N(4)-(N-acetyl-beta-glucosaminyl)asparagine amidase (PNG1) of Candida albicans (strain SC5314 / ATCC MYA-2876) (Yeast).